Consider the following 1163-residue polypeptide: Reticulon-4 (1163 aa).

Met1 carries the N-acetylmethionine modification. 2 disordered regions span residues 1–184 (MEDI…AASE) and 244–270 (SAVS…RATN). Residues 1–989 (MEDIDQSSLV…LYWRDIKKTG (989 aa)) lie on the Cytoplasmic side of the membrane. A phosphoserine mark is found at Ser7 and Ser16. Positions 7 to 16 (SSLVSSSTDS) are enriched in low complexity. Residues 31–55 (EPEDEEDEEEEEDEEEDDEDLEELE) are compositionally biased toward acidic residues. The span at 62-79 (AAGLSAAAVPPAAAAPLL) shows a compositional bias: low complexity. Residues 87–101 (PPAPRGPLPAAPPAA) are compositionally biased toward pro residues. Phosphoserine is present on Ser107. Over residues 138–147 (ARPPPPPPAG) the composition is skewed to pro residues. Ser149, Ser169, and Ser171 each carry phosphoserine. Ser329, Ser333, and Ser343 each carry phosphoserine. Thr347 is modified (phosphothreonine). Residues 406–423 (DSLEQKSLGKDSEGRNED) show a composition bias toward basic and acidic residues. 2 disordered regions span residues 406 to 437 (DSLE…KDSS) and 454 to 474 (TANT…DEKK). Phosphoserine is present on Ser425. Thr429 bears the Phosphothreonine mark. Residues 461–474 (LEDHTSENKTDEKK) show a composition bias toward basic and acidic residues. Residues Ser488, Ser689, Ser726, Ser766, and Ser830 each carry the phosphoserine modification. Thr832 carries the post-translational modification Phosphothreonine. Phosphoserine is present on residues Ser855, Ser922, and Ser962. Residues 976–1163 (VVDLLYWRDI…KIPGLKRKAD (188 aa)) enclose the Reticulon domain. The chain crosses the membrane as a helical span at residues 990-1010 (VVFGASLFLLLSLTVFSIVSV). At 1011–1104 (TAYIALALLS…LMWVFTYVGA (94 aa)) the chain is on the lumenal side. The residue at position 1075 (Lys1075) is an N6-acetyllysine. A helical membrane pass occupies residues 1105–1125 (LFNGLTLLILALISLFSIPVI). Residues 1126-1163 (YERHQVQIDHYLGLANKSVKDAMAKIQAKIPGLKRKAD) lie on the Cytoplasmic side of the membrane.

Binds to RTN4R. Interacts with ATL1. Interacts with TMEM170A. Interacts with RTN4IP1. As to quaternary structure, interacts in trans with CNTNAP1. Interacts with REEP5. Interacts with synaptic plasticity regulator PANTS; the interaction results in enhanced RTN4-mediated inhibition of AMPA receptor clustering. Interacts with GPR50. In terms of assembly, homodimer. Interacts with BAD/Bcl-xl and BCL2. Interact with RTN3. Interacts with NGBR. Interacts with SPTLC1. Interacts with GRAMD4. Interacts with CDH5. Interacts with BACE1 and BACE2. Interacts with REEP5. Interacts with RETREG3. Interacts with BACE1 and BACE2. Interacts with TMEM33. Isoforms A, B and C are present in optic nerve, spinal cord and cerebral cortex. Isoforms A and B are present in dorsal root ganglion, sciatic nerve and PC12 cells after longer exposure. Isoforms B and C are detected in kidney, cartilage, skin, lung and spleen. Isoform C is expressed at high level in skeletal muscle. In adult animals isoform A is expressed mainly in the nervous system.

It is found in the endoplasmic reticulum membrane. The protein localises to the cell membrane. It localises to the synapse. The protein resides in the cell junction. In terms of biological role, required to induce the formation and stabilization of endoplasmic reticulum (ER) tubules. They regulate membrane morphogenesis in the ER by promoting tubular ER production. They influence nuclear envelope expansion, nuclear pore complex formation and proper localization of inner nuclear membrane proteins. However each isoform have specific functions mainly depending on their tissue expression specificities. Developmental neurite growth regulatory factor with a role as a negative regulator of axon-axon adhesion and growth, and as a facilitator of neurite branching. Regulates neurite fasciculation, branching and extension in the developing nervous system. Involved in down-regulation of growth, stabilization of wiring and restriction of plasticity in the adult CNS. Regulates the radial migration of cortical neurons via an RTN4R-LINGO1 containing receptor complex. Acts as a negative regulator of central nervous system angiogenesis. Inhibits spreading, migration and sprouting of primary brain microvascular endothelial cells (MVECs). Also induces the retraction of MVECs lamellipodia and filopodia in a ROCK pathway-dependent manner. Its function is as follows. Mainly function in endothelial cells and vascular smooth muscle cells, is also involved in immune system regulation. Modulator of vascular remodeling, promotes the migration of endothelial cells but inhibits the migration of vascular smooth muscle cells. Regulates endothelial sphingolipid biosynthesis with direct effects on vascular function and blood pressure. Inhibits serine palmitoyltransferase, SPTLC1, the rate-limiting enzyme of the novo sphingolipid biosynthetic pathway, thereby controlling production of endothelial sphingosine-1-phosphate (S1P). Required to promote macrophage homing and functions such as cytokine/chemokine gene expression involved in angiogenesis, arteriogenesis and tissue repair. Mediates ICAM1 induced transendothelial migration of leukocytes such as monocytes and neutrophils and acute inflammation. Necessary for immune responses triggered by nucleic acid sensing TLRs, such as TLR9, is required for proper TLR9 location to endolysosomes. Also involved in immune response to LPS. Plays a role in liver regeneration through the modulation of hepatocytes proliferation. Reduces the anti-apoptotic activity of Bcl-xl and Bcl-2. This is likely consecutive to their change in subcellular location, from the mitochondria to the endoplasmic reticulum, after binding and sequestration. With isoform C, inhibits BACE1 activity and amyloid precursor protein processing. Functionally, regulates cardiomyocyte apoptosis upon hypoxic conditions. With isoform B, inhibits BACE1 activity and amyloid precursor protein processing. In Rattus norvegicus (Rat), this protein is Reticulon-4 (Rtn4).